We begin with the raw amino-acid sequence, 179 residues long: Large ribosomal subunit protein uL5 (179 aa).

Belongs to the universal ribosomal protein uL5 family. Part of the 50S ribosomal subunit; part of the 5S rRNA/L5/L18/L25 subcomplex. Contacts the 5S rRNA and the P site tRNA. Forms a bridge to the 30S subunit in the 70S ribosome.

This is one of the proteins that bind and probably mediate the attachment of the 5S RNA into the large ribosomal subunit, where it forms part of the central protuberance. In the 70S ribosome it contacts protein S13 of the 30S subunit (bridge B1b), connecting the 2 subunits; this bridge is implicated in subunit movement. Contacts the P site tRNA; the 5S rRNA and some of its associated proteins might help stabilize positioning of ribosome-bound tRNAs. This chain is Large ribosomal subunit protein uL5, found in Prochlorococcus marinus (strain MIT 9211).